Reading from the N-terminus, the 320-residue chain is ATP-dependent 6-phosphofructokinase (320 aa).

Position 12 (Gly-12) interacts with ATP. 22–26 (RGVVR) contacts ADP. Residues 73–74 (RF) and 103–106 (GDGS) each bind ATP. Asp-104 provides a ligand contact to Mg(2+). 126-128 (TID) contributes to the substrate binding site. Asp-128 functions as the Proton acceptor in the catalytic mechanism. Arg-155 serves as a coordination point for ADP. Residues Arg-163 and 170-172 (MGR) contribute to the substrate site. Residues 186 to 188 (GCE), Lys-212, and 214 to 216 (KKH) each bind ADP. Substrate is bound by residues Glu-223, Arg-244, and 250–253 (HIQR).

It belongs to the phosphofructokinase type A (PFKA) family. ATP-dependent PFK group I subfamily. Prokaryotic clade 'B1' sub-subfamily. As to quaternary structure, homotetramer. Requires Mg(2+) as cofactor.

The protein localises to the cytoplasm. The catalysed reaction is beta-D-fructose 6-phosphate + ATP = beta-D-fructose 1,6-bisphosphate + ADP + H(+). It participates in carbohydrate degradation; glycolysis; D-glyceraldehyde 3-phosphate and glycerone phosphate from D-glucose: step 3/4. Allosterically activated by ADP and other diphosphonucleosides, and allosterically inhibited by phosphoenolpyruvate. In terms of biological role, catalyzes the phosphorylation of D-fructose 6-phosphate to fructose 1,6-bisphosphate by ATP, the first committing step of glycolysis. This chain is ATP-dependent 6-phosphofructokinase, found in Vibrio parahaemolyticus serotype O3:K6 (strain RIMD 2210633).